Here is a 188-residue protein sequence, read N- to C-terminus: MLPLYVVNNYGQFNHLILRALRDLDIDAKLIPNTTPVSEVREGCQGIILGGGPDISRAGLSHEYVRLGKPVLGICLGLHVIAQEFGGTVQSGQKGGYGAVEVTITDHDGILQGYPQTMQVWASHADEVVTLPGDFDRLATSSICGNEAIAHKHLPIFGIQWHPEVSHTFEGHRVFENFFSICTGQNKG.

The Glutamine amidotransferase type-1 domain maps to 3–188; sequence PLYVVNNYGQ…FSICTGQNKG (186 aa). The active-site Nucleophile is the cysteine 75. Residues histidine 162 and glutamate 164 contribute to the active site.

As to quaternary structure, heterodimer composed of a glutamine amidotransferase subunit (A) and a GMP-binding subunit (B).

The catalysed reaction is XMP + L-glutamine + ATP + H2O = GMP + L-glutamate + AMP + diphosphate + 2 H(+). The protein operates within purine metabolism; GMP biosynthesis; GMP from XMP (L-Gln route): step 1/1. Its function is as follows. Catalyzes the synthesis of GMP from XMP. The protein is GMP synthase [glutamine-hydrolyzing] subunit A of Methanospirillum hungatei JF-1 (strain ATCC 27890 / DSM 864 / NBRC 100397 / JF-1).